A 421-amino-acid chain; its full sequence is Putative transporter AmpG 3 (421 aa).

Transmembrane regions (helical) follow at residues 6-26, 41-61, 80-100, 104-124, 139-159, 166-186, 230-250, 274-294, 297-317, 324-344, 360-380, and 388-408; these read YLIG…LIFF, IIGA…WSPF, WALV…KRSP, LCIT…QDIV, LSIV…LGSV, IIFG…VGPI, LLLI…PMAM, LLIM…IGIF, VLIG…LATI, FIIT…IISI, AISA…GGIC, and VFFL…YTIY.

It belongs to the major facilitator superfamily.

It localises to the cell inner membrane. The protein is Putative transporter AmpG 3 (ampG3) of Rickettsia prowazekii (strain Madrid E).